We begin with the raw amino-acid sequence, 442 residues long: Methylenetetrahydrofolate--tRNA-(uracil-5-)-methyltransferase TrmFO 1 (442 aa).

9–14 provides a ligand contact to FAD; it reads GAGLAG.

It belongs to the MnmG family. TrmFO subfamily. The cofactor is FAD.

The protein localises to the cytoplasm. It catalyses the reaction uridine(54) in tRNA + (6R)-5,10-methylene-5,6,7,8-tetrahydrofolate + NADH + H(+) = 5-methyluridine(54) in tRNA + (6S)-5,6,7,8-tetrahydrofolate + NAD(+). The catalysed reaction is uridine(54) in tRNA + (6R)-5,10-methylene-5,6,7,8-tetrahydrofolate + NADPH + H(+) = 5-methyluridine(54) in tRNA + (6S)-5,6,7,8-tetrahydrofolate + NADP(+). Its function is as follows. Catalyzes the folate-dependent formation of 5-methyl-uridine at position 54 (M-5-U54) in all tRNAs. The protein is Methylenetetrahydrofolate--tRNA-(uracil-5-)-methyltransferase TrmFO 1 of Mesoplasma florum (strain ATCC 33453 / NBRC 100688 / NCTC 11704 / L1) (Acholeplasma florum).